We begin with the raw amino-acid sequence, 398 residues long: tRNA (guanine-N(7)-)-methyltransferase (398 aa).

The S-adenosyl-L-methionine site is built by Glu-124, Glu-149, and Asp-176. A substrate-binding site is contributed by Asp-232.

The protein belongs to the class I-like SAM-binding methyltransferase superfamily. TrmB family.

It carries out the reaction guanosine(46) in tRNA + S-adenosyl-L-methionine = N(7)-methylguanosine(46) in tRNA + S-adenosyl-L-homocysteine. Its pathway is tRNA modification; N(7)-methylguanine-tRNA biosynthesis. Its function is as follows. Catalyzes the formation of N(7)-methylguanine at position 46 (m7G46) in tRNA. This chain is tRNA (guanine-N(7)-)-methyltransferase, found in Helicobacter acinonychis (strain Sheeba).